Reading from the N-terminus, the 173-residue chain is Protein-export protein SecB (173 aa).

It belongs to the SecB family. As to quaternary structure, homotetramer, a dimer of dimers. One homotetramer interacts with 1 SecA dimer.

The protein resides in the cytoplasm. One of the proteins required for the normal export of preproteins out of the cell cytoplasm. It is a molecular chaperone that binds to a subset of precursor proteins, maintaining them in a translocation-competent state. It also specifically binds to its receptor SecA. This Ralstonia nicotianae (strain ATCC BAA-1114 / GMI1000) (Ralstonia solanacearum) protein is Protein-export protein SecB.